The chain runs to 915 residues: MSEGNDQDAGKGRLSLRPAGRMELGRTVDAGSVRQSFSHGRSKVVQVEVRKKRGLQPGTPSAPEGGSSSAPAPQSGNAPQGTPRSGGGNRGSGRGGAGGAGRALTAQELAIRQRVLEQQRVEAARREVERREQEKISILSAAEEARRREEEAKRAAEEEARRKEQEEADRIAAEAARKAAESAPPAEAPPVPPPAQRERTAAPSSRSAPSRTAPSDDIRRPSRPAPIPSKVPVAAPSAPQTLRLRERGDEGEEERKPRRAGGGGAPAPRKAAAPVAKKAVAEPRRGGRIDVRAAIEGEDERTRSIASMRRQRDRERRQAELERLRADQLKVVRDVVLPETIAVGELANRMAVRAADVIKQLMRMGMMATVTQTIDADTAELVVQEFGHRVRRVSESDVEVGLEGISDIDSDLQPRPPVVTVMGHVDHGKTSLLDALRATDVAAGEAGGITQHIGAYQVTLPSRQKLTFLDTPGHEAFTAMRSRGASVTDIVVLVVAADDGVMPQTIEAIKHAKAANAPIIVAINKCDKPGANPGRVRQELLHHEIVVEDMGGDTQDVEVSALKRQNLDKLEEAILLQAEVLDLKANPDRAAEGTVVESRLDRGRGPVATVLVQKGTLRQGDIVVAGAEWGRVRAMLDDKGQQMKEALPSTPVEILGLAGVPSAGEPFVAVENESRAREISEFRQRKIREKMAAGIAAGRGTLEQMLSRIQAGAQKEVAVVIKADVQGSAEAIATTVQKQEHEEVKVRTLLSSVGQISESDVQLAKASNAVLIAFNVRATNQARELAQREGVDIRYYSIIYEVADDIEALVRGKIAPKQREKFLGYAEIRKVFEITKVGKVAGCMVTEGVVKRGCGVRLLRDNVVIHTGELSQLKRFKDDVKEVARNYECGLSFAGYNDIKEGDVVECYETELVPA.

2 disordered regions span residues 1 to 105 (MSEG…RALT) and 121 to 295 (VEAA…RAAI). Low complexity predominate over residues 57-81 (PGTPSAPEGGSSSAPAPQSGNAPQG). Over residues 84-101 (RSGGGNRGSGRGGAGGAG) the composition is skewed to gly residues. 2 stretches are compositionally biased toward basic and acidic residues: residues 121 to 135 (VEAA…EQEK) and 143 to 180 (EEAR…RKAA). Residues 186–195 (AEAPPVPPPA) show a composition bias toward pro residues. Composition is skewed to low complexity over residues 201-213 (AAPS…SRTA) and 230-239 (KVPVAAPSAP). Over residues 243–256 (RLRERGDEGEEERK) the composition is skewed to basic and acidic residues. A compositionally biased stretch (low complexity) spans 266-278 (PAPRKAAAPVAKK). The span at 279–295 (AVAEPRRGGRIDVRAAI) shows a compositional bias: basic and acidic residues. Residues 414-584 (PRPPVVTVMG…LLQAEVLDLK (171 aa)) enclose the tr-type G domain. The interval 423 to 430 (GHVDHGKT) is G1. Position 423-430 (423-430 (GHVDHGKT)) interacts with GTP. The segment at 448–452 (GITQH) is G2. The tract at residues 470 to 473 (DTPG) is G3. GTP-binding positions include 470 to 474 (DTPGH) and 524 to 527 (NKCD). The segment at 524 to 527 (NKCD) is G4. Positions 560-562 (SAL) are G5.

Belongs to the TRAFAC class translation factor GTPase superfamily. Classic translation factor GTPase family. IF-2 subfamily.

The protein localises to the cytoplasm. Its function is as follows. One of the essential components for the initiation of protein synthesis. Protects formylmethionyl-tRNA from spontaneous hydrolysis and promotes its binding to the 30S ribosomal subunits. Also involved in the hydrolysis of GTP during the formation of the 70S ribosomal complex. This is Translation initiation factor IF-2 from Granulibacter bethesdensis (strain ATCC BAA-1260 / CGDNIH1).